A 609-amino-acid polypeptide reads, in one-letter code: Kelch domain-containing protein 10 homolog (609 aa).

The tract at residues 103–146 (ASDLDEEEEEEDDDVDVDVDYGDTDSESEFEEMYSDEWTSSSDE) is disordered. A compositionally biased stretch (acidic residues) spans 104-137 (SDLDEEEEEEDDDVDVDVDYGDTDSESEFEEMYS). Kelch repeat units lie at residues 214 to 277 (HLYS…IHNN), 279 to 334 (LISH…IHKH), 335 to 381 (FLYT…RYRH), 389 to 437 (HIFV…GNRG), 458 to 508 (EAFI…HSDN), and 510 to 554 (CMYV…YNDN). Residues 576–609 (LPPQRRRRLDTSQPDPSMLISLYSNPKRARSSTQ) are disordered.

Interacts with Elongin-C; may be the substrate recognition component of an E3 ubiquitin ligase complex.

In terms of biological role, activates the Pk92B/DASK1-MAPK signaling cascade. This chain is Kelch domain-containing protein 10 homolog (slim), found in Drosophila melanogaster (Fruit fly).